The primary structure comprises 958 residues: Glycine dehydrogenase (decarboxylating) (958 aa).

At K708 the chain carries N6-(pyridoxal phosphate)lysine.

The protein belongs to the GcvP family. The glycine cleavage system is composed of four proteins: P, T, L and H. The cofactor is pyridoxal 5'-phosphate.

The enzyme catalyses N(6)-[(R)-lipoyl]-L-lysyl-[glycine-cleavage complex H protein] + glycine + H(+) = N(6)-[(R)-S(8)-aminomethyldihydrolipoyl]-L-lysyl-[glycine-cleavage complex H protein] + CO2. Functionally, the glycine cleavage system catalyzes the degradation of glycine. The P protein binds the alpha-amino group of glycine through its pyridoxal phosphate cofactor; CO(2) is released and the remaining methylamine moiety is then transferred to the lipoamide cofactor of the H protein. This is Glycine dehydrogenase (decarboxylating) from Photorhabdus laumondii subsp. laumondii (strain DSM 15139 / CIP 105565 / TT01) (Photorhabdus luminescens subsp. laumondii).